A 63-amino-acid polypeptide reads, in one-letter code: Small ribosomal subunit protein bS21 (63 aa).

Belongs to the bacterial ribosomal protein bS21 family.

In Bacteroides fragilis (strain ATCC 25285 / DSM 2151 / CCUG 4856 / JCM 11019 / LMG 10263 / NCTC 9343 / Onslow / VPI 2553 / EN-2), this protein is Small ribosomal subunit protein bS21.